The sequence spans 428 residues: Synaptotagmin-1 (428 aa).

Over 1–67 (MDSLLARVKR…KDKLINEIEN (67 aa)) the chain is Vesicular. Residues 16–50 (ALNPAQEGVTGGPDAAGLPDVSTSSPGGGGAGDKL) are disordered. Residues 68-92 (LPIWAIVLIIAGSLLFLVCCVYCVC) form a helical membrane-spanning segment. The Cytoplasmic segment spans residues 93–428 (RRSCRKRKKK…HTLQEVPEKN (336 aa)). Position 123 is a phosphoserine; by PRKC2 (serine 123). The phospholipid binding stretch occupies residues 147–395 (STKSEVKLGK…PIGRCVLGCN (249 aa)). C2 domains follow at residues 153–272 (KLGK…EDWK) and 286–419 (KLGD…AQWH). Residues aspartate 184, aspartate 190, aspartate 242, phenylalanine 243, aspartate 244, serine 247, lysine 248, aspartate 250, aspartate 317, aspartate 323, aspartate 377, and aspartate 379 each coordinate Ca(2+).

It belongs to the synaptotagmin family. In terms of assembly, binds SNAP25. Isoform 3 binds SNAP25 with higher affinity. It depends on Ca(2+) as a cofactor.

The protein localises to the cytoplasmic vesicle. Its subcellular location is the secretory vesicle. The protein resides in the synaptic vesicle membrane. It localises to the synapse. In terms of biological role, acts as inhibitor of neurotransmitter release. Overexpression leads to a decrease in the amplitude of the excitatory postsynaptic potential in dissected cholinergic and glutaminergic neurons while depletion with antisense oligonucleotides leads to an increase. Overexpression of isoform 1 blocks the reversal of synaptic depression by serotonin in sensory neurons. The chain is Synaptotagmin-1 (SYT1) from Aplysia californica (California sea hare).